Consider the following 367-residue polypeptide: uncharacterized protein (367 aa).

Helical transmembrane passes span 18–38, 239–259, 296–316, and 329–349; these read ILAL…GILG, VSYF…IGIG, ILGV…GYLI, and AIFY…ISAL.

The protein belongs to the ABC-4 integral membrane protein family.

The protein resides in the cell membrane. This is an uncharacterized protein from Methanocaldococcus jannaschii (strain ATCC 43067 / DSM 2661 / JAL-1 / JCM 10045 / NBRC 100440) (Methanococcus jannaschii).